The following is a 492-amino-acid chain: Glutamyl-tRNA(Gln) amidotransferase subunit A (492 aa).

Residues Lys79 and Ser154 each act as charge relay system in the active site. The active-site Acyl-ester intermediate is Ser178.

Belongs to the amidase family. GatA subfamily. In terms of assembly, heterotrimer of A, B and C subunits.

It catalyses the reaction L-glutamyl-tRNA(Gln) + L-glutamine + ATP + H2O = L-glutaminyl-tRNA(Gln) + L-glutamate + ADP + phosphate + H(+). Functionally, allows the formation of correctly charged Gln-tRNA(Gln) through the transamidation of misacylated Glu-tRNA(Gln) in organisms which lack glutaminyl-tRNA synthetase. The reaction takes place in the presence of glutamine and ATP through an activated gamma-phospho-Glu-tRNA(Gln). The sequence is that of Glutamyl-tRNA(Gln) amidotransferase subunit A from Acinetobacter baumannii (strain ATCC 17978 / DSM 105126 / CIP 53.77 / LMG 1025 / NCDC KC755 / 5377).